We begin with the raw amino-acid sequence, 576 residues long: Homeobox protein invected (576 aa).

Disordered regions lie at residues 1–68, 80–102, 305–344, 364–410, and 426–476; these read MSTL…DEQT, EVEEEHDLDLEDPASCCSENSVL, GGSVSGSSTGSSKNSGNTNGNRSPLKAPKKSGKPLNLAQS, NSND…GEDS, and SDRP…RPRT. The span at 80 to 91 shows a compositional bias: acidic residues; the sequence is EVEEEHDLDLED. 3 stretches are compositionally biased toward low complexity: residues 309–325, 364–381, and 395–405; these read SGSSTGSSKNSGNTNGN, NSNDSNSTATSSSTTNTS, and AGAGATGASGK. A compositionally biased stretch (gly residues) spans 450–468; it reads AGGGGGGVEKGEAADGGGV. The segment at residues 471–530 is a DNA-binding region (homeobox); sequence DKRPRTAFSGTQLARLKHEFNENRYLTEKRRQQLSGELGLNEAQIKIWFQNKRAKLKKSS.

It belongs to the engrailed homeobox family. In terms of tissue distribution, expressed in row 6/7 of the embryonic neuroectoderm.

It is found in the nucleus. In terms of biological role, engrailed (en) and invected (inv) are functionally redundant transcription factors in neuronal precursor cell NB5-3 specification. Inv is unable to substitute for en in other regulatory processes such as maintaining gsb expression in the neuroectoderm after stage 10 of embryogenesis. Maintenance of gsb expression in row 5 of the neuroectoderm involves an as yet unidentified short range signaling molecule. The sequence is that of Homeobox protein invected (inv) from Drosophila melanogaster (Fruit fly).